Consider the following 889-residue polypeptide: Disease resistance protein RPS5 (889 aa).

Gly-2 carries the N-myristoyl glycine lipid modification. Cys-4 is lipidated: S-palmitoyl cysteine. Residues 29-58 are a coiled coil; sequence IHNLSKNLASLQKAMRMLKARQYDVIRRLE. One can recognise an NB-ARC domain in the interval 140 to 444; sequence SEATPFADVD…SEGFINEKEG (305 aa). 183-190 contacts ATP; sequence GMGGVGKT. LRR repeat units lie at residues 518-539, 540-561, 564-586, 588-610, 611-633, and 634-656; these read TVRK…HECA, ALTT…FFRC, HLVV…ISEL, SLRY…WTLK, KLIH…SNLW, and NLRT…KELQ.

This sequence belongs to the disease resistance NB-LRR family. In uninfected plants, interacts with PBS1 through the coiled coil domain. Homodimer.

It is found in the cell membrane. Disease resistance (R) protein that specifically recognizes the avrPphB type III effector avirulence protein from Pseudomonas syringae. Also confers resistance against Hyaloperonospora parasitica (downy mildew). Resistance proteins guard the plant against pathogens that contain an appropriate avirulence protein via an indirect interaction with this avirulence protein. That triggers a defense system including the hypersensitive response, which restricts the pathogen growth. Requires PBS1 to trigger the defense reaction against avrPphB. In case of infection by Pseudomonas syringae, AvrPphB triggers RPS5-mediated defense mechanism via the cleavage of PBS1, suggesting that the cleavage of PBS1 could trigger an exchange of ADP for ATP, thereby activating RPS5. May function as a fine-tuned sensor of alterations in the structure of the effector target PBS1. The sequence is that of Disease resistance protein RPS5 (RPS5) from Arabidopsis thaliana (Mouse-ear cress).